The primary structure comprises 169 residues: Peptide deformylase (169 aa).

Fe cation contacts are provided by C91 and H133. E134 is an active-site residue. A Fe cation-binding site is contributed by H137.

This sequence belongs to the polypeptide deformylase family. Requires Fe(2+) as cofactor.

It carries out the reaction N-terminal N-formyl-L-methionyl-[peptide] + H2O = N-terminal L-methionyl-[peptide] + formate. Removes the formyl group from the N-terminal Met of newly synthesized proteins. Requires at least a dipeptide for an efficient rate of reaction. N-terminal L-methionine is a prerequisite for activity but the enzyme has broad specificity at other positions. The polypeptide is Peptide deformylase (Erwinia tasmaniensis (strain DSM 17950 / CFBP 7177 / CIP 109463 / NCPPB 4357 / Et1/99)).